The primary structure comprises 230 residues: Probable tetraspanin tspD (230 aa).

The Cytoplasmic segment spans residues 1-20; sequence MVEYLPSTPRYLKVPLIILN. The helical transmembrane segment at 21-41 threads the bilayer; that stretch reads VILWLLGLVLVIIGGICVGFF. At 42–65 the chain is on the extracellular side; the sequence is SRFKELQEVGGVSESIKSISVSLP. A helical transmembrane segment spans residues 66 to 86; that stretch reads AGVLSIGIFFMVLTVAGCIVA. Residues 87 to 90 lie on the Cytoplasmic side of the membrane; the sequence is YKEK. The chain crosses the membrane as a helical span at residues 91 to 111; it reads MVGLVFYTILMLVLLVVLIGI. At 112 to 200 the chain is on the extracellular side; it reads GGEALTYHNA…VNSKLYLVGS (89 aa). 4 N-linked (GlcNAc...) asparagine glycosylation sites follow: Asn133, Asn138, Asn163, and Asn179. A helical transmembrane segment spans residues 201 to 221; that stretch reads AGVAIGVIELVSLMFALFLIV. Over 222-230 the chain is Cytoplasmic; the sequence is RLYKSNSYR.

This sequence belongs to the tetraspanin (TM4SF) family.

It is found in the membrane. This is Probable tetraspanin tspD (tspD) from Dictyostelium discoideum (Social amoeba).